The following is a 600-amino-acid chain: Chaperone protein DnaK (600 aa).

Thr-175 is modified (phosphothreonine; by autocatalysis). The span at 569 to 578 (SFAQATAQQA) shows a compositional bias: low complexity. The tract at residues 569–600 (SFAQATAQQANTSESDPKADDSNTIDAEIKQD) is disordered. The segment covering 583-600 (SDPKADDSNTIDAEIKQD) has biased composition (basic and acidic residues).

It belongs to the heat shock protein 70 family.

Functionally, acts as a chaperone. This Mesomycoplasma hyopneumoniae (strain J / ATCC 25934 / NCTC 10110) (Mycoplasma hyopneumoniae) protein is Chaperone protein DnaK.